Here is a 159-residue protein sequence, read N- to C-terminus: Phosphopantetheine adenylyltransferase (159 aa).

S10 is a substrate binding site. ATP is bound by residues 10-11 (SF) and H18. Substrate-binding residues include K42, L77, and K91. Residues 92-94 (GIR), E102, and 126-132 (NAHVSSS) contribute to the ATP site.

It belongs to the bacterial CoaD family. In terms of assembly, homohexamer. It depends on Mg(2+) as a cofactor.

Its subcellular location is the cytoplasm. It catalyses the reaction (R)-4'-phosphopantetheine + ATP + H(+) = 3'-dephospho-CoA + diphosphate. Its pathway is cofactor biosynthesis; coenzyme A biosynthesis; CoA from (R)-pantothenate: step 4/5. Reversibly transfers an adenylyl group from ATP to 4'-phosphopantetheine, yielding dephospho-CoA (dPCoA) and pyrophosphate. This chain is Phosphopantetheine adenylyltransferase, found in Leifsonia xyli subsp. xyli (strain CTCB07).